A 350-amino-acid chain; its full sequence is Small ribosomal subunit biogenesis GTPase RsgA (350 aa).

Residues 1 to 17 (MSKNKLSKGQQRRVNAN) show a composition bias toward polar residues. Residues 1-24 (MSKNKLSKGQQRRVNANHQRRLKT) are disordered. The 170-residue stretch at 104 to 273 (TSVLTRPDFY…VIDSPGVREF (170 aa)) folds into the CP-type G domain. GTP-binding positions include 160–163 (NKID) and 214–222 (GQSGVGKSS). The Zn(2+) site is built by Cys-297, Cys-302, His-304, and Cys-310.

The protein belongs to the TRAFAC class YlqF/YawG GTPase family. RsgA subfamily. As to quaternary structure, monomer. Associates with 30S ribosomal subunit, binds 16S rRNA. The cofactor is Zn(2+).

Its subcellular location is the cytoplasm. Functionally, one of several proteins that assist in the late maturation steps of the functional core of the 30S ribosomal subunit. Helps release RbfA from mature subunits. May play a role in the assembly of ribosomal proteins into the subunit. Circularly permuted GTPase that catalyzes slow GTP hydrolysis, GTPase activity is stimulated by the 30S ribosomal subunit. This chain is Small ribosomal subunit biogenesis GTPase RsgA, found in Salmonella schwarzengrund (strain CVM19633).